We begin with the raw amino-acid sequence, 427 residues long: Gamma-glutamyl phosphate reductase (427 aa).

Belongs to the gamma-glutamyl phosphate reductase family.

It is found in the cytoplasm. The catalysed reaction is L-glutamate 5-semialdehyde + phosphate + NADP(+) = L-glutamyl 5-phosphate + NADPH + H(+). The protein operates within amino-acid biosynthesis; L-proline biosynthesis; L-glutamate 5-semialdehyde from L-glutamate: step 2/2. Catalyzes the NADPH-dependent reduction of L-glutamate 5-phosphate into L-glutamate 5-semialdehyde and phosphate. The product spontaneously undergoes cyclization to form 1-pyrroline-5-carboxylate. The protein is Gamma-glutamyl phosphate reductase of Rhizobium rhizogenes (strain K84 / ATCC BAA-868) (Agrobacterium radiobacter).